The following is a 260-amino-acid chain: Segregation and condensation protein A (260 aa).

This sequence belongs to the ScpA family. Component of a cohesin-like complex composed of ScpA, ScpB and the Smc homodimer, in which ScpA and ScpB bind to the head domain of Smc. The presence of the three proteins is required for the association of the complex with DNA.

It localises to the cytoplasm. In terms of biological role, participates in chromosomal partition during cell division. May act via the formation of a condensin-like complex containing Smc and ScpB that pull DNA away from mid-cell into both cell halves. The chain is Segregation and condensation protein A from Halalkalibacterium halodurans (strain ATCC BAA-125 / DSM 18197 / FERM 7344 / JCM 9153 / C-125) (Bacillus halodurans).